A 272-amino-acid chain; its full sequence is Shikimate dehydrogenase (NADP(+)) (272 aa).

Shikimate is bound by residues 14–16 (SKS) and Thr-61. Lys-65 serves as the catalytic Proton acceptor. Glu-77 is an NADP(+) binding site. Residues Asn-86 and Asp-102 each contribute to the shikimate site. Residues 126–130 (GAGGA), 149–154 (NRTADK), and Met-212 each bind NADP(+). A shikimate-binding site is contributed by Tyr-214. Gly-237 contributes to the NADP(+) binding site.

It belongs to the shikimate dehydrogenase family. Homodimer.

The catalysed reaction is shikimate + NADP(+) = 3-dehydroshikimate + NADPH + H(+). It participates in metabolic intermediate biosynthesis; chorismate biosynthesis; chorismate from D-erythrose 4-phosphate and phosphoenolpyruvate: step 4/7. Its function is as follows. Involved in the biosynthesis of the chorismate, which leads to the biosynthesis of aromatic amino acids. Catalyzes the reversible NADPH linked reduction of 3-dehydroshikimate (DHSA) to yield shikimate (SA). This is Shikimate dehydrogenase (NADP(+)) from Glaesserella parasuis serovar 5 (strain SH0165) (Haemophilus parasuis).